Here is a 499-residue protein sequence, read N- to C-terminus: Alpha-amylase A type-3 (499 aa).

The signal sequence occupies residues 1–21 (MMVAWWSLFLYGLQVAAPALA). Cys-51 and Cys-59 are oxidised to a cystine. Trp-104 lines the substrate pocket. Asn-142 is a binding site for Ca(2+). His-143 is a substrate binding site. Residues Cys-171 and Cys-185 are joined by a disulfide bond. Ca(2+) contacts are provided by Glu-183 and Asp-196. N-linked (GlcNAc...) asparagine glycosylation occurs at Asn-218. Arg-225 lines the substrate pocket. Asp-227, His-231, and Glu-251 together coordinate Ca(2+). Asp-227 acts as the Nucleophile in catalysis. Substrate is bound at residue 230 to 231 (KH). The active-site Proton donor is the Glu-251. Gly-255 is a substrate binding site. A disulfide bridge links Cys-261 with Cys-304. Residue Arg-365 participates in substrate binding. A disulfide bridge connects residues Cys-461 and Cys-496.

Belongs to the glycosyl hydrolase 13 family. As to quaternary structure, monomer. Ca(2+) serves as cofactor.

Its subcellular location is the secreted. It carries out the reaction Endohydrolysis of (1-&gt;4)-alpha-D-glucosidic linkages in polysaccharides containing three or more (1-&gt;4)-alpha-linked D-glucose units.. The protein is Alpha-amylase A type-3 (amy3) of Aspergillus oryzae (strain ATCC 42149 / RIB 40) (Yellow koji mold).